A 542-amino-acid polypeptide reads, in one-letter code: Probable serine/threonine-protein kinase ndrB (542 aa).

The tract at residues M1–N52 is disordered. Residues S9–E18 are compositionally biased toward low complexity. Acidic residues predominate over residues E19–I51. Positions F130–F437 constitute a Protein kinase domain. ATP-binding positions include I136–V144 and K159. D258 functions as the Proton acceptor in the catalytic mechanism. The AGC-kinase C-terminal domain maps to K438–F510. The tract at residues I452–R486 is disordered. The span at Q455–F465 shows a compositional bias: polar residues.

This sequence belongs to the protein kinase superfamily. AGC Ser/Thr protein kinase family.

Its subcellular location is the cytoplasm. It carries out the reaction L-seryl-[protein] + ATP = O-phospho-L-seryl-[protein] + ADP + H(+). The enzyme catalyses L-threonyl-[protein] + ATP = O-phospho-L-threonyl-[protein] + ADP + H(+). The sequence is that of Probable serine/threonine-protein kinase ndrB (ndrB) from Dictyostelium discoideum (Social amoeba).